A 508-amino-acid chain; its full sequence is Probable cytosol aminopeptidase (508 aa).

2 residues coordinate Mn(2+): Lys-276 and Asp-281. Lys-288 is a catalytic residue. Positions 299, 358, and 360 each coordinate Mn(2+). Arg-362 is a catalytic residue.

The protein belongs to the peptidase M17 family. The cofactor is Mn(2+).

The protein resides in the cytoplasm. The catalysed reaction is Release of an N-terminal amino acid, Xaa-|-Yaa-, in which Xaa is preferably Leu, but may be other amino acids including Pro although not Arg or Lys, and Yaa may be Pro. Amino acid amides and methyl esters are also readily hydrolyzed, but rates on arylamides are exceedingly low.. The enzyme catalyses Release of an N-terminal amino acid, preferentially leucine, but not glutamic or aspartic acids.. Presumably involved in the processing and regular turnover of intracellular proteins. Catalyzes the removal of unsubstituted N-terminal amino acids from various peptides. The sequence is that of Probable cytosol aminopeptidase from Chlorobium luteolum (strain DSM 273 / BCRC 81028 / 2530) (Pelodictyon luteolum).